A 67-amino-acid chain; its full sequence is Minor structural pilin EpdD (67 aa).

Residues 1 to 13 (MSVALKKFFSKRG) constitute a propeptide that is removed on maturation. The QXSXEXXXL signature appears at 14 to 22 (QLSLEFSVL).

In terms of processing, the N-terminus is cleaved by the prepilin peptidase EppA, which recognizes the class III signal sequence. N-glycosylated. Glycosylation is AglB-dependent. The N-glycosylation does not occur unless the signal peptide has been cleaved first.

The protein localises to the secreted. It is found in the cell surface. It localises to the fimbrium. Functionally, minor component of the type IV-like pili. Essential for pili formation. In Methanococcus maripaludis (strain DSM 14266 / JCM 13030 / NBRC 101832 / S2 / LL), this protein is Minor structural pilin EpdD.